A 117-amino-acid chain; its full sequence is NADH-quinone oxidoreductase subunit A (117 aa).

Transmembrane regions (helical) follow at residues 4-24 (WIGVALFIVVGIVFGAGGMLT), 64-84 (LMFVIFDVEVIYLYPWAVSFV), and 86-106 (LGLAGLIKMFLFIFILVLGLW).

This sequence belongs to the complex I subunit 3 family. NDH-1 is composed of 14 different subunits. Subunits NuoA, H, J, K, L, M, N constitute the membrane sector of the complex.

It is found in the cell membrane. It carries out the reaction a quinone + NADH + 5 H(+)(in) = a quinol + NAD(+) + 4 H(+)(out). NDH-1 shuttles electrons from NADH, via FMN and iron-sulfur (Fe-S) centers, to quinones in the respiratory chain. The immediate electron acceptor for the enzyme in this species is believed to be a menaquinone. Couples the redox reaction to proton translocation (for every two electrons transferred, four hydrogen ions are translocated across the cytoplasmic membrane), and thus conserves the redox energy in a proton gradient. The polypeptide is NADH-quinone oxidoreductase subunit A (Desulforamulus reducens (strain ATCC BAA-1160 / DSM 100696 / MI-1) (Desulfotomaculum reducens)).